The primary structure comprises 71 residues: Cruzioseptin-2 (71 aa).

A signal peptide spans 1-22 (MAFLKKSLFLVLFLGLVSLSIC). Residues 23–43 (EEEKREEENEEVQEDDDQSEE) constitute a propeptide that is removed on maturation. Gln-68 bears the Glutamine amide mark. Positions 70–71 (EQ) are excised as a propeptide.

Expressed by the skin glands.

Its subcellular location is the secreted. Has antimicrobial activity against Gram-negative bacterium E.coli (MIC=26.35 uM), against Gram-positive bacterium S.aureus (MIC=6.59 uM) and against fungus C.albicans (MIC=13.18 uM). At higher concentrations also has a bactericidal and fungicidal effect. Has hemagglutinating activity against horse erythrocytes. The chain is Cruzioseptin-2 from Cruziohyla calcarifer (Splendid leaf frog).